Here is a 578-residue protein sequence, read N- to C-terminus: Lipoprotein A (578 aa).

An N-terminal signal peptide occupies residues 1 to 27 (MNKKYFKKYSWVLILSTSILAPMTLAS). Cys28 carries N-palmitoyl cysteine lipidation. A lipid anchor (S-diacylglycerol cysteine) is attached at Cys28. 2 disordered regions span residues 35–135 (KEDK…NTSA) and 172–203 (AKDD…EVKD). Over residues 41–50 (NDSSNLSNKT) the composition is skewed to polar residues. Over residues 51 to 74 (NKSDPNDHLKDKDKNVSQDNKDST) the composition is skewed to basic and acidic residues. A compositionally biased stretch (polar residues) spans 75-96 (NKAVSNENSQTQSQKTNESSQN). Over residues 108–119 (ITNQNSSSNTKS) the composition is skewed to low complexity. A compositionally biased stretch (basic and acidic residues) spans 172–181 (AKDDSKEKSK).

It belongs to the M.pulmonis LipAB lipoprotein family.

Its subcellular location is the cell membrane. This chain is Lipoprotein A (lipA), found in Mycoplasmopsis pulmonis (strain UAB CTIP) (Mycoplasma pulmonis).